The chain runs to 80 residues: Defensin-like protein 14 (80 aa).

The signal sequence occupies residues 1–29 (MAKSAAIITFLFAALVLFAAFEAPIMVEA). Position 30 is a pyrrolidone carboxylic acid (Gln-30). 4 cysteine pairs are disulfide-bonded: Cys-33–Cys-80, Cys-44–Cys-65, Cys-50–Cys-74, and Cys-54–Cys-76.

The protein belongs to the DEFL family.

The protein localises to the secreted. Functionally, confers broad-spectrum resistance to pathogens. Has antifungal activity in vitro. The chain is Defensin-like protein 14 (PDF1.3) from Arabidopsis thaliana (Mouse-ear cress).